Reading from the N-terminus, the 706-residue chain is K(+)-insensitive pyrophosphate-energized proton pump (706 aa).

5 consecutive transmembrane segments (helical) span residues 1–21 (MTAL…AIWA), 62–82 (IVIF…GFAI), 83–103 (GAIL…RANV), 128–148 (GMLV…FLVY), and 164–184 (VALG…GGIF). Lysine 186 provides a ligand contact to substrate. Mg(2+) contacts are provided by aspartate 189, aspartate 193, asparagine 216, and aspartate 219. 6 consecutive transmembrane segments (helical) span residues 231-251 (LFET…IFFA), 261-281 (TLPL…TFFV), 298-318 (IATG…LIGF), 328-348 (GMSL…IIWI), 376-398 (IQGL…AGIL), and 412-432 (ATAT…FGPV). Position 434 (aspartate 434) interacts with Mg(2+). The next 4 helical transmembrane spans lie at 465–485 (AVTK…LFAA), 516–536 (YVVV…AMGM), 585–605 (IIPS…IYAI), and 616–636 (AFSA…FVAI). Residues aspartate 646, aspartate 672, and aspartate 676 each contribute to the Ca(2+) site. Lysine 679 contributes to the substrate binding site. Residues 685-705 (AVNPMIKITNIVALLLLAILA) form a helical membrane-spanning segment.

Belongs to the H(+)-translocating pyrophosphatase (TC 3.A.10) family. K(+)-insensitive subfamily. In terms of assembly, homodimer. The cofactor is Mg(2+).

The protein resides in the cell inner membrane. It catalyses the reaction diphosphate + H2O + H(+)(in) = 2 phosphate + 2 H(+)(out). Its function is as follows. Proton pump that utilizes the energy of pyrophosphate hydrolysis as the driving force for proton movement across the membrane. Generates a proton motive force. This chain is K(+)-insensitive pyrophosphate-energized proton pump, found in Bradyrhizobium diazoefficiens (strain JCM 10833 / BCRC 13528 / IAM 13628 / NBRC 14792 / USDA 110).